The sequence spans 376 residues: Nuclear egress protein 1 (376 aa).

A Phosphoserine modification is found at Ser19. A disordered region spans residues Arg22–Pro57. Polar residues predominate over residues Val33 to Asn45. The CCCH-type zinc finger occupies Cys106–His211. Residues Val316–Pro376 form a disordered region. The segment covering Val317–Pro332 has biased composition (polar residues).

It belongs to the herpesviridae NEC1 protein family. As to quaternary structure, forms a heterohexameric complex with NEC2. Interacts with capsid vertex specific component 2/CVC2; this interaction directs the capsid to the host inner nuclear membrane to initiate budding. Phosphorylated at serine residues in the N-terminus. This phosphorylation regulates the localization within the inner nuclear membrane. Phosphorylation by viral kinase UL97 at Ser-19 plays an important role for correct viral nuclear egress complex (NEC) localization.

It localises to the host nucleus inner membrane. Plays an essential role in virion nuclear egress, the first step of virion release from infected cell. Within the host nucleus, NEC1 interacts with the newly formed capsid through the vertexes and directs it to the inner nuclear membrane by associating with NEC2. Induces the budding of the capsid at the inner nuclear membrane as well as its envelopment into the perinuclear space. There, the NEC1/NEC2 complex promotes the fusion of the enveloped capsid with the outer nuclear membrane and the subsequent release of the viral capsid into the cytoplasm where it will reach the secondary budding sites in the host Golgi or trans-Golgi network. The chain is Nuclear egress protein 1 from Homo sapiens (Human).